Here is a 551-residue protein sequence, read N- to C-terminus: Putative BTB/POZ domain-containing protein L76 (551 aa).

The BTB domain maps to 19-90 (TDIILEIEDD…FYGQENDVID (72 aa)).

It belongs to the mimivirus BTB/WD family.

The polypeptide is Putative BTB/POZ domain-containing protein L76 (Acanthamoeba polyphaga (Amoeba)).